The chain runs to 550 residues: Selinene synthase (550 aa).

Residues Asp314, Asp318, Asp450, and Glu458 each contribute to the Mg(2+) site. The DDXXD motif motif lies at 314-318; the sequence is DDIYD.

It belongs to the terpene synthase family. Requires Mg(2+) as cofactor. The cofactor is Mn(2+).

The enzyme catalyses (2E,6E)-farnesyl diphosphate = (+)-beta-selinene + diphosphate. It carries out the reaction (2E,6E)-farnesyl diphosphate = alpha-selinene + diphosphate. It functions in the pathway secondary metabolite biosynthesis; terpenoid biosynthesis. Functionally, sesquiterpene synthase that catalyzes the formation of alpha- and beta-selinene from trans,trans-farnesyl diphosphate (FPP). Also produces some nerolidol. This is Selinene synthase (SES) from Ocimum basilicum (Sweet basil).